A 300-amino-acid polypeptide reads, in one-letter code: Putative S-adenosyl-L-methionine-dependent methyltransferase MMAR_1058 (300 aa).

S-adenosyl-L-methionine contacts are provided by residues aspartate 127 and 156-157; that span reads DL.

The protein belongs to the UPF0677 family.

Exhibits S-adenosyl-L-methionine-dependent methyltransferase activity. This chain is Putative S-adenosyl-L-methionine-dependent methyltransferase MMAR_1058, found in Mycobacterium marinum (strain ATCC BAA-535 / M).